The primary structure comprises 497 residues: Probable cytosol aminopeptidase (497 aa).

Mn(2+) contacts are provided by Lys265 and Asp270. The active site involves Lys277. Mn(2+)-binding residues include Asp288, Asp347, and Glu349. Residue Arg351 is part of the active site.

It belongs to the peptidase M17 family. Mn(2+) serves as cofactor.

The protein resides in the cytoplasm. It carries out the reaction Release of an N-terminal amino acid, Xaa-|-Yaa-, in which Xaa is preferably Leu, but may be other amino acids including Pro although not Arg or Lys, and Yaa may be Pro. Amino acid amides and methyl esters are also readily hydrolyzed, but rates on arylamides are exceedingly low.. The enzyme catalyses Release of an N-terminal amino acid, preferentially leucine, but not glutamic or aspartic acids.. Its function is as follows. Presumably involved in the processing and regular turnover of intracellular proteins. Catalyzes the removal of unsubstituted N-terminal amino acids from various peptides. This Geobacillus thermodenitrificans (strain NG80-2) protein is Probable cytosol aminopeptidase.